Consider the following 191-residue polypeptide: Repressor Rok (191 aa).

Residues 2 to 43 (FNEREALRLRLEQLNEAEVKVIREYQIERDKIYAKLRELDRN) adopt a coiled-coil conformation. Residues 75–96 (SYQPQSQQQSVQPQLQSISSLP) show a composition bias toward low complexity. The tract at residues 75-116 (SYQPQSQQQSVQPQLQSISSLPAGIPDGTTRRRRGTARPGSK) is disordered. A DNA-binding region spans residues 95–191 (LPAGIPDGTT…EIESAESANE (97 aa)).

The protein localises to the cytoplasm. It is found in the nucleoid. In terms of biological role, repressor of comK, the master regulator of competence development. Overexpression seems to be lethal. Represses at least 20 genes that specify membrane-localized and secreted proteins, including some that encode products with antibiotic activity. Binds to many AT-rich sites in the chromosome, many of which are known or thought to derive from horizontal gene transfer; helps keep mobile element ICEBs1 quiescent in the genome. Binds to its own promoter and is thus probably autoregulatory. The sequence is that of Repressor Rok from Bacillus subtilis (strain 168).